We begin with the raw amino-acid sequence, 1838 residues long: Lysine-specific demethylase 5 (1838 aa).

Residues 1 to 150 are disordered; sequence MSAKTEADNT…SSNKFDQGKN (150 aa). Residues 15-31 show a composition bias toward gly residues; that stretch reads SGGGGVGSGTSSGGGAS. Positions 45–56 are enriched in low complexity; the sequence is RNSTGNGTNSGS. Residues 136 to 145 are compositionally biased toward polar residues; it reads HTQPHSSNKF. The JmjN domain maps to 161 to 202; the sequence is CPVFRPTTEEFKNPLAYISKIRSIAEKCGIAKILPPATWSPP. In terms of domain architecture, ARID spans 226 to 316; the sequence is TRVKLNFLDQ…ILHPFEVYTS (91 aa). Positions 321 to 333 are enriched in low complexity; sequence GPTPTSSGSGSTP. Disordered stretches follow at residues 321-380 and 416-437; these read GPTP…GLSG and GSPL…KGGE. Position 323 is a phosphothreonine (T323). 3 stretches are compositionally biased toward polar residues: residues 351–361, 369–380, and 416–430; these read TRQQIAPPNET, FGNSNASCGLSG, and GSPL…TRGA. A PHD-type 1 zinc finger spans residues 448–498; sequence KYICHICNRGDVEESMLLCDGCDDSYHTFCLLPPLTSIPKGEWLCPRCVVE. The 167-residue stretch at 591–757 folds into the JmjC domain; sequence EYAESSWNLN…MGRECVNHYS (167 aa). Residues H637, D640, and H725 each contribute to the Fe cation site. Residues 960–1049 are a coiled coil; that stretch reads VRTRSDHNQE…LRIELQQLDL (90 aa). A PHD-type 2 zinc finger spans residues 1293–1354; that stretch reads DMFCLCKSEF…KWLCPSCVRS (62 aa). The interval 1401–1462 is disordered; it reads SSPDVSAAQE…SDADDDDDED (62 aa). Low complexity predominate over residues 1407–1417; sequence AAQEAIMAQQQ. S1422 and S1433 each carry phosphoserine. Residues 1453-1462 are compositionally biased toward acidic residues; sequence SDADDDDDED. S1474 is modified (phosphoserine). Residues 1548–1751 form a disordered region; it reads YMQRQRQQHT…QRSQQAAQED (204 aa). Composition is skewed to low complexity over residues 1576-1595, 1624-1650, 1658-1667, 1674-1683, and 1692-1736; these read NSPN…SNSG, GKKG…PGAD, ANGGNTNSST, SATTTPTPGS, and STTA…ATGG. S1635 and S1640 each carry phosphoserine. Residues 1753-1808 form a PHD-type 3 zinc finger; the sequence is EEECRAENCHKPTGREVDWVQCDGGCNEWFHMYCVGLNRSQIKPDDDYICIRCTKT. The segment at 1814–1838 is disordered; sequence QGSGHSMSVASTTTPGKQRAVQSAR.

This sequence belongs to the JARID1 histone demethylase family. As to quaternary structure, interacts with Myc. Part of a complex containing Lid, Myc and Ash2. Requires Fe(2+) as cofactor.

It is found in the nucleus. The catalysed reaction is N(6),N(6),N(6)-trimethyl-L-lysyl(4)-[histone H3] + 3 2-oxoglutarate + 3 O2 = L-lysyl(4)-[histone H3] + 3 formaldehyde + 3 succinate + 3 CO2. Its activity is regulated as follows. Inhibited by Myc. Histone demethylase that specifically demethylates 'Lys-4' of histone H3, thereby playing a central role in histone code. Does not demethylate histone H3 'Lys-9', H3 'Lys-27', H3 'Lys-36', H3 'Lys-79' or H4 'Lys-20'. Specifically demethylates trimethylated H3 'Lys-4'. Required for the correct regulation of homeotic genes during development. Plays a role in the regulation of the circadian rhythm and in maintaining the normal periodicity of the circadian clock. Regulates the expression of clock-controlled genes including tim, per and cry. This is Lysine-specific demethylase 5 from Drosophila melanogaster (Fruit fly).